Here is a 561-residue protein sequence, read N- to C-terminus: DNA ligase B (561 aa).

The active-site N6-AMP-lysine intermediate is Lys-125.

Belongs to the NAD-dependent DNA ligase family. LigB subfamily.

It carries out the reaction NAD(+) + (deoxyribonucleotide)n-3'-hydroxyl + 5'-phospho-(deoxyribonucleotide)m = (deoxyribonucleotide)n+m + AMP + beta-nicotinamide D-nucleotide.. Its function is as follows. Catalyzes the formation of phosphodiester linkages between 5'-phosphoryl and 3'-hydroxyl groups in double-stranded DNA using NAD as a coenzyme and as the energy source for the reaction. In Salmonella gallinarum (strain 287/91 / NCTC 13346), this protein is DNA ligase B.